The sequence spans 513 residues: MPYLLEMKNITKTFGSVKAIDNVCLRLNAGEIVSLCGENGSGKSTLMKVLCGIYPHGSYEGEIIFAGEEIQASHIRDTERKGIAIIHQELALVKELTVLENIFLGNEITHNGIMDYDLMTLRCQKLLAQVSLSISPDTRVGDLGLGQQQLVEIAKALNKQVRLLILDEPTASLTEQETSILLDIIRDLQQHGIACIYISHKLNEVKAISDTICVIRDGQHIGTRDAAGMSEDDIITMMVGRELTALYPNEPHTTGDEILRIEHLTAWHPVNRHIKRVNDVSFSLKRGEILGIAGLVGAGRTETIQCLFGVWPGQWEGKIYIDGKQVDIRNCQQAIAQGIAMVPEDRKRDGIVPVMAVGKNITLAALNKFTGGISQLDDAAEQKCILESIQQLKVKTSSPDLAIGRLSGGNQQKAILARCLLLNPRILILDEPTRGIDIGAKYEIYKLINQLVQQGIAVIVISSELPEVLGLSDRVLVMHEGKLKANLINHNLTQEQVMEAALRSEHHVEKQSV.

2 consecutive ABC transporter domains span residues 5–242 and 259–505; these read LEMK…VGRE and LRIE…LRSE. Residue 37–44 participates in ATP binding; it reads GENGSGKS.

It belongs to the ABC transporter superfamily. Xylose importer (TC 3.A.1.2.4) family. In terms of assembly, the complex is composed of two ATP-binding proteins (XylG), two transmembrane proteins (XylH) and a solute-binding protein (XylF).

The protein localises to the cell inner membrane. The enzyme catalyses D-xylose(out) + ATP + H2O = D-xylose(in) + ADP + phosphate + H(+). Functionally, part of the ABC transporter complex XylFGH involved in xylose import. Responsible for energy coupling to the transport system. The XylFGH system can also transport ribose in absence of xylose. The protein is Xylose import ATP-binding protein XylG of Escherichia coli (strain K12).